We begin with the raw amino-acid sequence, 432 residues long: Ornithine decarboxylase, chloroplastic (432 aa).

At lysine 95 the chain carries N6-(pyridoxal phosphate)lysine. Residues serine 227, glycine 265, and 298–301 (EPGR) each bind pyridoxal 5'-phosphate. 341 to 342 (YD) serves as a coordination point for substrate. The Proton donor; shared with dimeric partner role is filled by cysteine 377. Substrate is bound at residue aspartate 378. A pyridoxal 5'-phosphate-binding site is contributed by tyrosine 406.

Belongs to the Orn/Lys/Arg decarboxylase class-II family. Homodimer. Only the dimer is catalytically active, as the active sites are constructed of residues from both monomers. Pyridoxal 5'-phosphate is required as a cofactor.

It is found in the plastid. The protein localises to the chloroplast. The catalysed reaction is L-lysine + H(+) = cadaverine + CO2. It catalyses the reaction L-ornithine + H(+) = putrescine + CO2. It participates in alkaloid biosynthesis; nicotine biosynthesis. The protein operates within amine and polyamine biosynthesis; putrescine biosynthesis via L-ornithine pathway; putrescine from L-ornithine: step 1/1. Repressed by alpha-difluoromethylornithine (DFMO), 5,5'-dithiobis-(2-nitrobenzoic acid) (DTNB) and salicylaldehyde. Its function is as follows. Involved in the biosynthesis of pyridine alkaloid natural products, leading mainly to the production of anabasine, anatabine, nicotine and nornicotine, effective deterrents against herbivores with antiparasitic and pesticide properties (neurotoxins); nornicotine serves as the precursor in the synthesis of the carcinogen compound N'-nitrosonornicotine (NNN). Catalyzes the first and rate-limiting step of polyamine biosynthesis that converts ornithine into putrescine, which is the precursor for the polyamines, spermidine and spermine. Can also use, with a lower efficiency, L-lysine as substrate to produce cadaverine. Polyamines are essential for cell proliferation and are implicated in cellular processes, ranging from DNA replication to apoptosis. In Nicotiana glutinosa (Tobacco), this protein is Ornithine decarboxylase, chloroplastic.